Consider the following 617-residue polypeptide: Melatonin-related receptor (617 aa).

Topologically, residues 1–30 (MGPTLAVPTPYGCIGCKLPQPEYPPALIIF) are extracellular. A helical transmembrane segment spans residues 31–51 (MFCAMVITIVVDLIGNSMVIL). The Cytoplasmic segment spans residues 52-64 (AVTKNKKLRNSGN). Residues 65 to 85 (IFVVSLSVADMLVAIYPYPLM) form a helical membrane-spanning segment. Residues 86-103 (LHAMSIGGWDLSQLQCQM) lie on the Extracellular side of the membrane. A disulfide bridge links C101 with C178. Residues 104–124 (VGFITGLSVVGSIFNIVAIAI) form a helical membrane-spanning segment. At 125–143 (NRYCYICHSLQYERIFSVR) the chain is on the cytoplasmic side. A helical transmembrane segment spans residues 144 to 164 (NTCIYLVITWIMTVLAVLPNM). At 165 to 188 (YIGTIEYDPRTYTCIFNYLNNPVF) the chain is on the extracellular side. Residues 189–209 (TVTIVCIHFVLPLLIVGFCYV) traverse the membrane as a helical segment. Residues 210–239 (RIWTKVLAARDPAGQNPDNQLAEVRNFLTM) are Cytoplasmic-facing. A helical membrane pass occupies residues 240 to 260 (FVIFLLFAVCWCPINVLTVLV). Residues 261-273 (AVSPKEMAGKIPN) are Extracellular-facing. A helical transmembrane segment spans residues 274–294 (WLYLAAYFIAYFNSCLNAVIY). The Cytoplasmic segment spans residues 295-617 (GLLNENFRRE…VEDDPDEMAV (323 aa)). Disordered regions lie at residues 340-438 (AHAR…ATVY) and 464-596 (SVHF…VTTS). Residues 341–353 (HARDQAREQDRAH) are compositionally biased toward basic and acidic residues. Residues 485-500 (GSHSKSAFSAATSHPK) are compositionally biased toward polar residues.

This sequence belongs to the G-protein coupled receptor 1 family. Homodimer, and heterodimer with MTNR1A and MTNR1B. Interacts with KAT5. Interacts with RTN4 isoform A/NOGO-A. Interacts with TGFBR1. As to quaternary structure, interacts with GTF2I. Post-translationally, cleaved by CAPN1 in a calcium-dependent manner. In terms of tissue distribution, hypothalamus and pituitary.

The protein resides in the cell membrane. It localises to the postsynaptic density. The protein localises to the nucleus. Functionally, g protein-coupled receptor that plays a role in numerous physiological processes including regulation of energy metabolism, neurite outgrowth or cell migration. Promotes self-renewal and neuronal differentiation of neural progenitor cells through activation of the NOTCH and WNT/beta-catenin signaling pathways. Modulates the KAT5-dependent glucocorticoid receptor signaling by modulating KAT5 subcellular compartmentalisation. Also plays a role in the activation TGFBR1 in the absence of TGFBR2 by interfering with FKBP1A binding to TGFBR1, leading to induction of both canonical and non-canonical SMAD signaling pathways resulting in inhibition of proliferation or promotion of migration. Upon cleavage by CAPN1, functions as a scaffold in the nucleus for interacting partners such as GTF2I to promote FOS promoter activation. The sequence is that of Melatonin-related receptor (GPR50) from Homo sapiens (Human).